The following is a 113-amino-acid chain: uncharacterized protein (113 aa).

The chain crosses the membrane as a helical span at residues 4-26 (VLFKIAVALLYLLSFFLHRLHLR). The tract at residues 32–74 (RRRRRRHHRRHHRRHHHHRRRRRRRRRRRRRHHRHHHHRHRRR) is disordered.

Its subcellular location is the membrane. This is an uncharacterized protein from Saccharomyces cerevisiae (strain ATCC 204508 / S288c) (Baker's yeast).